A 60-amino-acid polypeptide reads, in one-letter code: DNA gyrase inhibitor YacG (60 aa).

Zn(2+) contacts are provided by cysteine 15, cysteine 18, cysteine 30, and cysteine 34.

The protein belongs to the DNA gyrase inhibitor YacG family. In terms of assembly, interacts with GyrB. Zn(2+) is required as a cofactor.

In terms of biological role, inhibits all the catalytic activities of DNA gyrase by preventing its interaction with DNA. Acts by binding directly to the C-terminal domain of GyrB, which probably disrupts DNA binding by the gyrase. The chain is DNA gyrase inhibitor YacG from Nitrobacter hamburgensis (strain DSM 10229 / NCIMB 13809 / X14).